The primary structure comprises 419 residues: Adenylosuccinate synthetase (419 aa).

GTP-binding positions include 11-17 (GDEGKGK) and 39-41 (GHS). Aspartate 12 acts as the Proton acceptor in catalysis. Residues aspartate 12 and glycine 39 each contribute to the Mg(2+) site. IMP contacts are provided by residues 12–15 (DEGK), 37–40 (NAGH), threonine 129, arginine 143, asparagine 221, threonine 236, and arginine 296. Catalysis depends on histidine 40, which acts as the Proton donor. 292–298 (VSTGRKR) is a binding site for substrate. GTP is bound by residues arginine 298, 324 to 326 (KLD), and 408 to 410 (GTG).

It belongs to the adenylosuccinate synthetase family. In terms of assembly, homodimer. The cofactor is Mg(2+).

Its subcellular location is the cytoplasm. It carries out the reaction IMP + L-aspartate + GTP = N(6)-(1,2-dicarboxyethyl)-AMP + GDP + phosphate + 2 H(+). The protein operates within purine metabolism; AMP biosynthesis via de novo pathway; AMP from IMP: step 1/2. Plays an important role in the de novo pathway and in the salvage pathway of purine nucleotide biosynthesis. Catalyzes the first committed step in the biosynthesis of AMP from IMP. The protein is Adenylosuccinate synthetase of Chaetomium globosum (strain ATCC 6205 / CBS 148.51 / DSM 1962 / NBRC 6347 / NRRL 1970) (Soil fungus).